We begin with the raw amino-acid sequence, 465 residues long: uncharacterized protein (465 aa).

Polar residues predominate over residues 87–112 (KTSQQIDSSPPQTPTTSNGSMMTRRQ). 2 disordered regions span residues 87–169 (KTSQ…SYDD) and 201–244 (EGYI…NNIF). Low complexity predominate over residues 113–139 (NANNAISSNNNTNTNVTNGSSSNTSLN). Residues 141 to 157 (GDEEQEEEEEEENDEDS) are compositionally biased toward acidic residues. A compositionally biased stretch (low complexity) spans 217–244 (NRNNNNNNINKNNNNNINNNNNNNNNIF).

This is an uncharacterized protein from Dictyostelium discoideum (Social amoeba).